A 363-amino-acid polypeptide reads, in one-letter code: Probable methyltransferase-like protein 24 (363 aa).

The N-terminal stretch at 1–38 is a signal peptide; it reads MGTAKPPGRGCGALPRWLLGAALLLGLRLCMELRHAGS. The interval 37–62 is disordered; that stretch reads GSGPPGRRDLRGPPRTHLLPAPGPLR.

The protein belongs to the methyltransferase superfamily.

Its subcellular location is the secreted. Functionally, probable methyltransferase. The protein is Probable methyltransferase-like protein 24 (Mettl24) of Rattus norvegicus (Rat).